Here is a 255-residue protein sequence, read N- to C-terminus: 3-dehydroquinate dehydratase (255 aa).

Residues 47 to 49 and Arg83 contribute to the 3-dehydroquinate site; that span reads EWR. His144 functions as the Proton donor/acceptor in the catalytic mechanism. Lys171 functions as the Schiff-base intermediate with substrate in the catalytic mechanism. Positions 214, 233, and 237 each coordinate 3-dehydroquinate.

The protein belongs to the type-I 3-dehydroquinase family. As to quaternary structure, homodimer.

The enzyme catalyses 3-dehydroquinate = 3-dehydroshikimate + H2O. The protein operates within metabolic intermediate biosynthesis; chorismate biosynthesis; chorismate from D-erythrose 4-phosphate and phosphoenolpyruvate: step 3/7. Its function is as follows. Involved in the third step of the chorismate pathway, which leads to the biosynthesis of aromatic amino acids. Catalyzes the cis-dehydration of 3-dehydroquinate (DHQ) and introduces the first double bond of the aromatic ring to yield 3-dehydroshikimate. This is 3-dehydroquinate dehydratase from Alkaliphilus oremlandii (strain OhILAs) (Clostridium oremlandii (strain OhILAs)).